We begin with the raw amino-acid sequence, 176 residues long: Large ribosomal subunit protein uL6 (176 aa).

The segment covering 151 to 170 (RPPEPYKGKGVRYADEQVRR) has biased composition (basic and acidic residues). Residues 151-176 (RPPEPYKGKGVRYADEQVRRKEAKKK) are disordered.

This sequence belongs to the universal ribosomal protein uL6 family. Part of the 50S ribosomal subunit.

Its function is as follows. This protein binds to the 23S rRNA, and is important in its secondary structure. It is located near the subunit interface in the base of the L7/L12 stalk, and near the tRNA binding site of the peptidyltransferase center. The polypeptide is Large ribosomal subunit protein uL6 (Shewanella piezotolerans (strain WP3 / JCM 13877)).